We begin with the raw amino-acid sequence, 283 residues long: Phosphatidylserine decarboxylase proenzyme (283 aa).

Residues aspartate 96, histidine 152, and serine 250 each act as charge relay system; for autoendoproteolytic cleavage activity in the active site. Serine 250 acts as the Schiff-base intermediate with substrate; via pyruvic acid; for decarboxylase activity in catalysis. A Pyruvic acid (Ser); by autocatalysis modification is found at serine 250.

This sequence belongs to the phosphatidylserine decarboxylase family. PSD-B subfamily. Prokaryotic type I sub-subfamily. Heterodimer of a large membrane-associated beta subunit and a small pyruvoyl-containing alpha subunit. The cofactor is pyruvate. In terms of processing, is synthesized initially as an inactive proenzyme. Formation of the active enzyme involves a self-maturation process in which the active site pyruvoyl group is generated from an internal serine residue via an autocatalytic post-translational modification. Two non-identical subunits are generated from the proenzyme in this reaction, and the pyruvate is formed at the N-terminus of the alpha chain, which is derived from the carboxyl end of the proenzyme. The autoendoproteolytic cleavage occurs by a canonical serine protease mechanism, in which the side chain hydroxyl group of the serine supplies its oxygen atom to form the C-terminus of the beta chain, while the remainder of the serine residue undergoes an oxidative deamination to produce ammonia and the pyruvoyl prosthetic group on the alpha chain. During this reaction, the Ser that is part of the protease active site of the proenzyme becomes the pyruvoyl prosthetic group, which constitutes an essential element of the active site of the mature decarboxylase.

It localises to the cell membrane. The enzyme catalyses a 1,2-diacyl-sn-glycero-3-phospho-L-serine + H(+) = a 1,2-diacyl-sn-glycero-3-phosphoethanolamine + CO2. It functions in the pathway phospholipid metabolism; phosphatidylethanolamine biosynthesis; phosphatidylethanolamine from CDP-diacylglycerol: step 2/2. Its function is as follows. Catalyzes the formation of phosphatidylethanolamine (PtdEtn) from phosphatidylserine (PtdSer). The sequence is that of Phosphatidylserine decarboxylase proenzyme from Acinetobacter baumannii (strain ACICU).